The sequence spans 345 residues: Phosphoribosylformylglycinamidine cyclo-ligase (345 aa).

It belongs to the AIR synthase family.

Its subcellular location is the cytoplasm. It catalyses the reaction 2-formamido-N(1)-(5-O-phospho-beta-D-ribosyl)acetamidine + ATP = 5-amino-1-(5-phospho-beta-D-ribosyl)imidazole + ADP + phosphate + H(+). The protein operates within purine metabolism; IMP biosynthesis via de novo pathway; 5-amino-1-(5-phospho-D-ribosyl)imidazole from N(2)-formyl-N(1)-(5-phospho-D-ribosyl)glycinamide: step 2/2. This is Phosphoribosylformylglycinamidine cyclo-ligase from Shouchella clausii (strain KSM-K16) (Alkalihalobacillus clausii).